The following is a 288-amino-acid chain: Diaminopimelate epimerase (288 aa).

Residues asparagine 14 and asparagine 67 each contribute to the substrate site. Catalysis depends on cysteine 76, which acts as the Proton donor. Substrate-binding positions include 77–78, asparagine 166, asparagine 199, and 217–218; these read GN and ER. Cysteine 226 acts as the Proton acceptor in catalysis. 227-228 lines the substrate pocket; it reads GT.

The protein belongs to the diaminopimelate epimerase family. In terms of assembly, homodimer.

Its subcellular location is the cytoplasm. It carries out the reaction (2S,6S)-2,6-diaminopimelate = meso-2,6-diaminopimelate. It functions in the pathway amino-acid biosynthesis; L-lysine biosynthesis via DAP pathway; DL-2,6-diaminopimelate from LL-2,6-diaminopimelate: step 1/1. In terms of biological role, catalyzes the stereoinversion of LL-2,6-diaminopimelate (L,L-DAP) to meso-diaminopimelate (meso-DAP), a precursor of L-lysine and an essential component of the bacterial peptidoglycan. The sequence is that of Diaminopimelate epimerase from Bacillus mycoides (strain KBAB4) (Bacillus weihenstephanensis).